The sequence spans 311 residues: Ribosomal RNA small subunit methyltransferase H (311 aa).

S-adenosyl-L-methionine is bound by residues 33-35, aspartate 53, phenylalanine 77, aspartate 98, and glutamine 105; that span reads GGH.

The protein belongs to the methyltransferase superfamily. RsmH family.

The protein localises to the cytoplasm. The catalysed reaction is cytidine(1402) in 16S rRNA + S-adenosyl-L-methionine = N(4)-methylcytidine(1402) in 16S rRNA + S-adenosyl-L-homocysteine + H(+). Specifically methylates the N4 position of cytidine in position 1402 (C1402) of 16S rRNA. The protein is Ribosomal RNA small subunit methyltransferase H of Thiobacillus denitrificans (strain ATCC 25259 / T1).